The chain runs to 294 residues: ATP phosphoribosyltransferase (294 aa).

This sequence belongs to the ATP phosphoribosyltransferase family. Long subfamily. Mg(2+) serves as cofactor.

Its subcellular location is the cytoplasm. It catalyses the reaction 1-(5-phospho-beta-D-ribosyl)-ATP + diphosphate = 5-phospho-alpha-D-ribose 1-diphosphate + ATP. It participates in amino-acid biosynthesis; L-histidine biosynthesis; L-histidine from 5-phospho-alpha-D-ribose 1-diphosphate: step 1/9. Feedback inhibited by histidine. Its function is as follows. Catalyzes the condensation of ATP and 5-phosphoribose 1-diphosphate to form N'-(5'-phosphoribosyl)-ATP (PR-ATP). Has a crucial role in the pathway because the rate of histidine biosynthesis seems to be controlled primarily by regulation of HisG enzymatic activity. The sequence is that of ATP phosphoribosyltransferase from Chlorobium luteolum (strain DSM 273 / BCRC 81028 / 2530) (Pelodictyon luteolum).